A 219-amino-acid polypeptide reads, in one-letter code: 7-cyano-7-deazaguanine synthase (219 aa).

10-20 is a binding site for ATP; it reads FSGGQDSTTCL. Residues Cys188, Cys196, Cys199, and Cys202 each coordinate Zn(2+).

This sequence belongs to the QueC family. It depends on Zn(2+) as a cofactor.

It catalyses the reaction 7-carboxy-7-deazaguanine + NH4(+) + ATP = 7-cyano-7-deazaguanine + ADP + phosphate + H2O + H(+). It participates in purine metabolism; 7-cyano-7-deazaguanine biosynthesis. In terms of biological role, catalyzes the ATP-dependent conversion of 7-carboxy-7-deazaguanine (CDG) to 7-cyano-7-deazaguanine (preQ(0)). The polypeptide is 7-cyano-7-deazaguanine synthase (Neisseria meningitidis serogroup C / serotype 2a (strain ATCC 700532 / DSM 15464 / FAM18)).